A 77-amino-acid chain; its full sequence is Large ribosomal subunit protein eL20 (77 aa).

This sequence belongs to the eukaryotic ribosomal protein eL20 family. As to quaternary structure, part of the 50S ribosomal subunit. Binds 23S rRNA.

In Pyrococcus horikoshii (strain ATCC 700860 / DSM 12428 / JCM 9974 / NBRC 100139 / OT-3), this protein is Large ribosomal subunit protein eL20.